The sequence spans 123 residues: Fluoride-specific ion channel FluC 1 (123 aa).

The next 4 helical transmembrane spans lie at 1 to 21, 34 to 54, 59 to 79, and 99 to 119; these read MVDL…RYTL, PLAT…LYGF, VIWL…STYI, and LTSI…ANFF. Na(+) contacts are provided by Gly70 and Thr73.

It belongs to the fluoride channel Fluc/FEX (TC 1.A.43) family.

The protein resides in the cell membrane. The catalysed reaction is fluoride(in) = fluoride(out). Na(+) is not transported, but it plays an essential structural role and its presence is essential for fluoride channel function. Fluoride-specific ion channel. Important for reducing fluoride concentration in the cell, thus reducing its toxicity. This is Fluoride-specific ion channel FluC 1 from Carboxydothermus hydrogenoformans (strain ATCC BAA-161 / DSM 6008 / Z-2901).